The following is a 292-amino-acid chain: Replication-associated protein A (292 aa).

One can recognise a CRESS-DNA virus Rep endonuclease domain in the interval 9–111 (RLQSKYVFLT…DGDIKTRGDF (103 aa)). The RCR-1 signature appears at 16 to 19 (FLTY). A divalent metal cation contacts are provided by glutamate 50, histidine 58, and histidine 60. The short motif at 58–60 (HYH) is the RCR-2 element. Tyrosine 98 functions as the For DNA cleavage activity in the catalytic mechanism. Positions 98–101 (YISK) match the RCR-3 motif. An a divalent metal cation-binding site is contributed by aspartate 102. Positions 160–172 (SANKLFPPQPEQY) are oligomerization. The segment at 181–185 (LRCHE) is binding to RBR1. The disordered stretch occupies residues 230 to 292 (GLGSDTPAST…PSSSSHCGSN (63 aa)). Residues 255–292 (SGDTTTGTGPSTSPTTMNTPPIISSTTSPSSSSHCGSN) show a composition bias toward low complexity.

This sequence belongs to the geminiviridae Rep protein family. Homooligomer. Interacts with host retinoblastoma-related protein 1 (RBR1), and may thereby deregulate the host cell cycle. Part of the C- and V-complexes which are RepA-Rep-DNA complexes involved in the c-sense and v-sense transcription. Requires Mg(2+) as cofactor. Mn(2+) is required as a cofactor.

Its subcellular location is the host nucleus. It is found in the host cytoplasm. Implicated in enhancement of V-sense gene expression. Acts a an inhibitor of C-sense gene transcription. The polypeptide is Replication-associated protein A (Bean yellow dwarf virus (BeYDV)).